A 292-amino-acid chain; its full sequence is Ribosomal protein L11 methyltransferase (292 aa).

S-adenosyl-L-methionine contacts are provided by Thr-136, Gly-159, Asp-181, and Asn-228.

The protein belongs to the methyltransferase superfamily. PrmA family.

It is found in the cytoplasm. It catalyses the reaction L-lysyl-[protein] + 3 S-adenosyl-L-methionine = N(6),N(6),N(6)-trimethyl-L-lysyl-[protein] + 3 S-adenosyl-L-homocysteine + 3 H(+). Its function is as follows. Methylates ribosomal protein L11. This Agrobacterium fabrum (strain C58 / ATCC 33970) (Agrobacterium tumefaciens (strain C58)) protein is Ribosomal protein L11 methyltransferase.